We begin with the raw amino-acid sequence, 555 residues long: Formate--tetrahydrofolate ligase (555 aa).

Position 64 to 71 (64 to 71) interacts with ATP; sequence TKAGIGKT.

It belongs to the formate--tetrahydrofolate ligase family.

The catalysed reaction is (6S)-5,6,7,8-tetrahydrofolate + formate + ATP = (6R)-10-formyltetrahydrofolate + ADP + phosphate. Its pathway is one-carbon metabolism; tetrahydrofolate interconversion. The polypeptide is Formate--tetrahydrofolate ligase (Bacteroides fragilis (strain ATCC 25285 / DSM 2151 / CCUG 4856 / JCM 11019 / LMG 10263 / NCTC 9343 / Onslow / VPI 2553 / EN-2)).